Consider the following 508-residue polypeptide: Polyamine oxidase FMS1 (508 aa).

It belongs to the flavin monoamine oxidase family. It depends on FAD as a cofactor.

It carries out the reaction spermine + O2 + H2O = 3-aminopropanal + spermidine + H2O2. The catalysed reaction is spermidine + O2 + H2O = 3-aminopropanal + putrescine + H2O2. The enzyme catalyses N(1)-acetylspermine + O2 + H2O = 3-acetamidopropanal + spermidine + H2O2. It catalyses the reaction N(1)-acetylspermidine + O2 + H2O = 3-acetamidopropanal + putrescine + H2O2. It carries out the reaction N(8)-acetylspermidine + O2 + H2O = 4-acetamidobutanal + propane-1,3-diamine + H2O2. Its function is as follows. Involved in the production of beta-alanine, a precursor of pantothenic acid. Multicopy suppressor of fenpropimorph resistance. The sequence is that of Polyamine oxidase FMS1 (FMS1) from Saccharomyces cerevisiae (strain ATCC 204508 / S288c) (Baker's yeast).